Here is a 329-residue protein sequence, read N- to C-terminus: Beta-ketoacyl-[acyl-carrier-protein] synthase III (329 aa).

Catalysis depends on residues Cys-113 and His-255. The segment at 256 to 260 is ACP-binding; that stretch reads QANQR. The active site involves Asn-285.

This sequence belongs to the thiolase-like superfamily. FabH family. As to quaternary structure, homodimer.

It is found in the cytoplasm. It carries out the reaction malonyl-[ACP] + acetyl-CoA + H(+) = 3-oxobutanoyl-[ACP] + CO2 + CoA. The protein operates within lipid metabolism; fatty acid biosynthesis. Its function is as follows. Catalyzes the condensation reaction of fatty acid synthesis by the addition to an acyl acceptor of two carbons from malonyl-ACP. Catalyzes the first condensation reaction which initiates fatty acid synthesis and may therefore play a role in governing the total rate of fatty acid production. Possesses both acetoacetyl-ACP synthase and acetyl transacylase activities. Its substrate specificity determines the biosynthesis of branched-chain and/or straight-chain of fatty acids. The polypeptide is Beta-ketoacyl-[acyl-carrier-protein] synthase III (Chlorobium phaeovibrioides (strain DSM 265 / 1930) (Prosthecochloris vibrioformis (strain DSM 265))).